The following is a 211-amino-acid chain: Pyrrolidone-carboxylate peptidase 1 (211 aa).

Residues Glu-79, Cys-142, and His-164 contribute to the active site.

Belongs to the peptidase C15 family. As to quaternary structure, homotetramer.

Its subcellular location is the cytoplasm. It catalyses the reaction Release of an N-terminal pyroglutamyl group from a polypeptide, the second amino acid generally not being Pro.. Its function is as follows. Removes 5-oxoproline from various penultimate amino acid residues except L-proline. This Saccharolobus solfataricus (strain ATCC 35092 / DSM 1617 / JCM 11322 / P2) (Sulfolobus solfataricus) protein is Pyrrolidone-carboxylate peptidase 1 (pcp1).